The primary structure comprises 167 residues: UPF0254 protein MJ1251 (167 aa).

Belongs to the UPF0254 family.

This Methanocaldococcus jannaschii (strain ATCC 43067 / DSM 2661 / JAL-1 / JCM 10045 / NBRC 100440) (Methanococcus jannaschii) protein is UPF0254 protein MJ1251.